The sequence spans 321 residues: MKLAGLKSIENAHEDSVWAATWVPATEDRPALLLTGSLDETVKLWRPDELDLVRTNTGHSLGVAALAAHPSGIIAASSSIDSFVRVFDVDTNATIAVLEAPPSEVWGMQFEPKGTILAVAGGSSASVKLWDTASWRLISTLSIPRPDAPKPSDKTSSKKFVLSVAWSPNGKRLACGSMDGTICVFDVDRSKLLHQLEGHNMPVRSLVFSPVDPRVLFSGSDDGHVNMHDAEGKTLLGSMSGHTSWVLSVDASPDGGAIATGSSDRTVRLWDLKMRAAIQTMSNHNDQVWSVAFRPPGGTGVRAGRLASVSDDKSVSLYDYS.

WD repeat units follow at residues 12–55 (AHED…LVRT), 58–97 (GHSL…TIAV), 100–140 (APPS…LIST), 156–195 (SSKK…LLHQ), 198–238 (GHNM…LLGS), 241–280 (GHTS…AIQT), and 283–319 (NHND…SLYD).

Component of the nuclear PAF1 complex (PAF1C), which consists of VIP2/ELF7/PAF1, VIP3/SKI8/WDR61, VIP4/LEO1, VIP5/RTF1, VIP6/ELF8/CTR9 and CDC73. Component of the cytoplasmic SKI complex, which consists of SKI2, SKI3 and VIP3/SKI8. Interacts with VIP4 and VIP6.

It is found in the nucleus. It localises to the cytoplasm. Component of the PAF1 complex (PAF1C) which is involved in histone modifications such as methylation on histone H3 'Lys-4' (H3K4me3). Involved in regulation of flowering time. Required for the expression of the flowering repressor and MADS box gene FLC. Required for histone H3 trimethylation on 'Lys-4' (H3K4me3) and histone dimethylation on 'Lys-36' (H3K36me2) at the FLC locus. Prevents trimethylation on 'Lys-27' (H3K27me3) at the same locus. Not required for meiotic recombination or progression. Component of the SKI complex which is thought to be involved in exosome-mediated RNA decay and associates with transcriptionally active genes in a manner dependent on PAF1 complex (PAF1C). Required for proper progression of cell differentiation process. This is WD repeat-containing protein VIP3 from Arabidopsis thaliana (Mouse-ear cress).